We begin with the raw amino-acid sequence, 351 residues long: DNA polymerase IV (351 aa).

Positions I4–G185 constitute a UmuC domain. Mg(2+)-binding residues include D8 and D103. E104 is an active-site residue.

The protein belongs to the DNA polymerase type-Y family. In terms of assembly, monomer. Mg(2+) serves as cofactor.

The protein localises to the cytoplasm. The catalysed reaction is DNA(n) + a 2'-deoxyribonucleoside 5'-triphosphate = DNA(n+1) + diphosphate. In terms of biological role, poorly processive, error-prone DNA polymerase involved in untargeted mutagenesis. Copies undamaged DNA at stalled replication forks, which arise in vivo from mismatched or misaligned primer ends. These misaligned primers can be extended by PolIV. Exhibits no 3'-5' exonuclease (proofreading) activity. May be involved in translesional synthesis, in conjunction with the beta clamp from PolIII. The chain is DNA polymerase IV from Salmonella choleraesuis (strain SC-B67).